The chain runs to 578 residues: MPTILVQSYGFRQKMKTIFIPTALALLLAACSGNKVTETLKNEAYGNSEFYINKAEQSRNIEEQQSYRLLAVRKLIEENKVVEAQNTFSEILVAKLNDEQKLEHRLLIAQLAALQGNTEAQGVLRALPQTLLSQSQRLRVYQTQARIAENQNDVIAAVNARALMDSYMTDTQSRQANNDKIWEMLRNANRGMLEKAVAGPGEIGLAGWLALVVAYNQNMSNPAQLPQVIEMWKQQYPNHSAVLLLPIELRNVSSFQQTQLNGVALLLPLSGDAKILGEIIKRGFDDAKGTTTMQVQVFDTDSAPINDLLMQAKQQGAQTIIGPLLKPRVDEMLTSPEISNINVLALNSTPNVRAVAKVCYYGLSPEAEARSAAERFLKDGLQHAVVVAPNGDFGTRSAEAFAQRWRQLTNRDTDIRYYNQAFEVTSLLQGSGIGQGSGLYALGTAEQLSDLKQSLDNSPLANQFPIYTSSRSNSPNNGPDFRLTMEGVKFSEIPLLSDPSSSEYKKAEQIVESDFSMMRLYAMGSDTWSIANKFNEFRQIPGYKVHGLTGVLSAGPNCNIEREMNWLQYRGGSIVDAN.

Positions 1–30 (MPTILVQSYGFRQKMKTIFIPTALALLLAA) are cleaved as a signal peptide. C31 is lipidated: N-palmitoyl cysteine. C31 carries S-diacylglycerol cysteine lipidation.

Belongs to the LpoA family. Interacts with PBP1a.

Its subcellular location is the cell outer membrane. Functionally, regulator of peptidoglycan synthesis that is essential for the function of penicillin-binding protein 1A (PBP1a). The chain is Penicillin-binding protein activator LpoA from Glaesserella parasuis serovar 5 (strain SH0165) (Haemophilus parasuis).